Consider the following 631-residue polypeptide: Pro-interleukin-16 (631 aa).

2 disordered regions span residues 30-269 (ENPG…FPLT) and 317-344 (PKEG…ASDT). A compositionally biased stretch (low complexity) spans 132 to 144 (SSSSSSIKQRISS). Residue Ser-221 is modified to Phosphoserine. Polar residues predominate over residues 322–344 (SPTSSSNEDSAANGSAETSASDT). Residues 405 to 501 (KQLDSIHVTI…IVTRKLTAES (97 aa)) form an interaction with PPP1R12A, PPP1R12B and PPP1R12C region. PDZ domains lie at 411-496 (HVTI…VTRK) and 533-618 (TVTL…IRRK).

In terms of assembly, homotetramer. Pro-interleukin-16 interacts (via PDZ 2 domain) with PPP1R12A, PPP1R12B and PPP1R12C. Pro-interleukin-16 interacts with GRIN2A. Pro-interleukin-16 interacts with GABPB1. Pro-interleukin-16 interacts (via PDZ 3 domain) with HDAC3.

The protein resides in the secreted. The protein localises to the cytoplasm. It localises to the nucleus. In terms of biological role, interleukin-16 stimulates a migratory response in CD4+ lymphocytes, monocytes, and eosinophils. Primes CD4+ T-cells for IL-2 and IL-15 responsiveness. Also induces T-lymphocyte expression of interleukin 2 receptor. Ligand for CD4. Functionally, pro-interleukin-16 is involved in cell cycle progression in T-cells. Appears to be involved in transcriptional regulation of SKP2 and is probably part of a transcriptional repression complex on the core promoter of the SKP2 gene. May act as a scaffold for GABPB1 (the DNA-binding subunit the GABP transcription factor complex) and HDAC3 thus maintaining transcriptional repression and blocking cell cycle progression in resting T-cells. This chain is Pro-interleukin-16 (IL16), found in Chlorocebus aethiops (Green monkey).